The primary structure comprises 38 residues: AIAVELARDVFEAIQTLSRGSVFQDMPLVSNKELMDLR.

With respect to regulation, the antimicrobial activity of BAC79 was completely lost after treatment with enzymes trypsin, pepsin, proteinase-K, and carboxypeptidase, while there was no loss of activity with either amylase or lipase. Has antibacterial activity against a wide spectrum of Gram-positive and Gram-negative bacteria, including L.monocytogenes which is inhibited through disruption of the cell membrane. In Weissella confusa (Lactobacillus confusus), this protein is Bacteriocin BAC79.